A 75-amino-acid polypeptide reads, in one-letter code: MKFLALFVTLLVVLALVSAQKSQNTNHNVIVIGAKKPGAAPAAAAAAAPAAPPAAAPAAAPAAPEAGLADAPAES.

A signal peptide spans 1–19 (MKFLALFVTLLVVLALVSA). The segment at 55 to 75 (AAPAAAPAAPEAGLADAPAES) is disordered. A compositionally biased stretch (low complexity) spans 56-75 (APAAAPAAPEAGLADAPAES).

Lumen fluid of male accessory glands, becomes seminal fluid.

It is found in the secreted. In terms of biological role, transferred from male to female during mating and may affect egglaying and behavior after mating. This is Accessory gland-specific peptide 57Da (Mst57Da) from Drosophila melanogaster (Fruit fly).